Here is a 334-residue protein sequence, read N- to C-terminus: MMNLKYLLFFCLVQALHYCYAYGDPSLSNELDRFNPCPYSDDTVKMIILTRENKKHDFYTLNTIKNHNEFKKSTIKHQVVFITHGFTSTATAENFLAMAEALLDKGNYLVILIDWRVAACTNEMAGVKLAYYSYAASNTRLVGNYIATVTKMLVQQYNVPMANIRLVGHSLGAHTSGFAGKKVQELRLGKYSEIIGLDPAGPSFKSQECSQRICETDANYVQIIHTSNHLGTLVTLGTVDFYMNNGYNQPGCGLPIIGETCSHTRAVKYFTECIRHECCLIGVPQSKNPQPVSKCTRNQCVCVGLNAKTYPKTGSFYVPVESKAPYCNNKGKII.

The signal sequence occupies residues 1–23 (MMNLKYLLFFCLVQALHYCYAYG). The propeptide occupies 24 to 33 (DPSLSNELDR). The cysteines at positions 37 and 120 are disulfide-linked. Residue Ser170 is the Nucleophile of the active site. Catalysis depends on Asp198, which acts as the Charge relay system. 2 disulfides stabilise this stretch: Cys209–Cys214 and Cys252–Cys261. The active-site Charge relay system is the His263. Disulfide bonds link Cys278-Cys302, Cys279-Cys327, and Cys295-Cys300.

Belongs to the AB hydrolase superfamily. Lipase family. Post-translationally, not glycosylated. Expressed by the venom gland.

It localises to the secreted. The enzyme catalyses a 1,2-diacyl-sn-glycero-3-phosphocholine + H2O = a 2-acyl-sn-glycero-3-phosphocholine + a fatty acid + H(+). Functionally, catalyzes the hydrolysis of phosphatidylcholine with phospholipase A1 activity (6.3 U/ml). May act as an allergen and induce hemolytic activity. In Vespa affinis (Lesser banded hornet), this protein is Phospholipase A1 2.